A 353-amino-acid chain; its full sequence is Photosystem II D2 protein (353 aa).

Thr-2 is modified (N-acetylthreonine). Thr-2 carries the phosphothreonine modification. The helical transmembrane segment at 41–61 (CAYFALGGWFTGTTFVTSWYT) threads the bilayer. Residue His-118 coordinates chlorophyll a. The chain crosses the membrane as a helical span at residues 125-141 (GFMLRQFELARSVQLRP). 2 residues coordinate pheophytin a: Gln-130 and Asn-143. Residues 153 to 166 (VFVSVFLIYPLGQS) traverse the membrane as a helical segment. His-198 serves as a coordination point for chlorophyll a. Residues 208 to 228 (AALLCAIHGATVENTLFEDGD) form a helical membrane-spanning segment. His-215 and Phe-262 together coordinate a plastoquinone. Fe cation is bound at residue His-215. Position 269 (His-269) interacts with Fe cation. A helical transmembrane segment spans residues 279–295 (GLWMSALGVVGLALNLR).

It belongs to the reaction center PufL/M/PsbA/D family. PSII is composed of 1 copy each of membrane proteins PsbA, PsbB, PsbC, PsbD, PsbE, PsbF, PsbH, PsbI, PsbJ, PsbK, PsbL, PsbM, PsbT, PsbX, PsbY, PsbZ, Psb30/Ycf12, at least 3 peripheral proteins of the oxygen-evolving complex and a large number of cofactors. It forms dimeric complexes. The D1/D2 heterodimer binds P680, chlorophylls that are the primary electron donor of PSII, and subsequent electron acceptors. It shares a non-heme iron and each subunit binds pheophytin, quinone, additional chlorophylls, carotenoids and lipids. There is also a Cl(-1) ion associated with D1 and D2, which is required for oxygen evolution. The PSII complex binds additional chlorophylls, carotenoids and specific lipids. is required as a cofactor.

It is found in the plastid. The protein localises to the chloroplast thylakoid membrane. It carries out the reaction 2 a plastoquinone + 4 hnu + 2 H2O = 2 a plastoquinol + O2. In terms of biological role, photosystem II (PSII) is a light-driven water:plastoquinone oxidoreductase that uses light energy to abstract electrons from H(2)O, generating O(2) and a proton gradient subsequently used for ATP formation. It consists of a core antenna complex that captures photons, and an electron transfer chain that converts photonic excitation into a charge separation. The D1/D2 (PsbA/PsbD) reaction center heterodimer binds P680, the primary electron donor of PSII as well as several subsequent electron acceptors. D2 is needed for assembly of a stable PSII complex. This chain is Photosystem II D2 protein, found in Amborella trichopoda.